A 1024-amino-acid chain; its full sequence is Gamma-tubulin complex component 5 (1024 aa).

3 disordered regions span residues 153 to 203, 523 to 545, and 853 to 873; these read IGLG…GGPQ, NEDKVSDSASASSGSDQGPSSRQ, and SQAKEDIPRDQDTPSQFGPPK. The segment covering 189-198 has biased composition (basic and acidic residues); the sequence is TPLEEQDHNR. A compositionally biased stretch (low complexity) spans 529 to 543; that stretch reads DSASASSGSDQGPSS. Over residues 853-864 the composition is skewed to basic and acidic residues; it reads SQAKEDIPRDQD.

The protein belongs to the TUBGCP family. In terms of assembly, component of the gamma-tubulin ring complex (gTuRC) consisting of TUBGCP2, TUBGCP3, TUBGCP4, TUBGCP5 and TUBGCP6 and gamma-tubulin TUBG1 or TUBG2. TUBGCP2, TUBGCP3, TUBGCP4, TUBGCP5 and TUBGCP6 assemble in a 5:5:2:1:1 stoichiometry; each is associated with a gamma-tubulin, thereby arranging 14 gamma-tubulins in a helical manner. Gamma-tubulin at the first position is blocked by TUBGCP3 at the last position, allowing 13 protafilaments to grow into a microtubule. The gTuRC (via TUBGCP3 and TUBGCP6) interacts with ACTB and MZT1; the interactions form a luminal bridge that stabilizes the initial structure during complex assembly. The gTuRC (via TUBGCP2) interacts with MZT2A/MZT2B and CDK5RAP2 (via CM1 motif); the interactions play a role in gTuRC activation.

The protein resides in the cytoplasm. It is found in the cytoskeleton. It localises to the microtubule organizing center. Its subcellular location is the centrosome. Functionally, component of the gamma-tubulin ring complex (gTuRC) which mediates microtubule nucleation. The gTuRC regulates the minus-end nucleation of alpha-beta tubulin heterodimers that grow into microtubule protafilaments, a critical step in centrosome duplication and spindle formation. The polypeptide is Gamma-tubulin complex component 5 (Tubgcp5) (Mus musculus (Mouse)).